The following is a 110-amino-acid chain: Small ribosomal subunit protein eS25 (110 aa).

The tract at residues 1 to 38 is disordered; sequence MGGKKKPTLSQLAKKAEKEKAQQAQKAKKEVKKEETPA. Positions 14 to 38 are enriched in basic and acidic residues; the sequence is KKAEKEKAQQAQKAKKEVKKEETPA.

This sequence belongs to the eukaryotic ribosomal protein eS25 family.

The protein is Small ribosomal subunit protein eS25 (rps25e) of Pyrobaculum aerophilum (strain ATCC 51768 / DSM 7523 / JCM 9630 / CIP 104966 / NBRC 100827 / IM2).